Here is a 106-residue protein sequence, read N- to C-terminus: Colipase A (106 aa).

The first 11 residues, 1–11 (LLLVALAVAYA), serve as a signal peptide directing secretion. The propeptide at 12 to 16 (VPDPR) is enterostatin, activation peptide. 5 disulfide bridges follow: cysteine 28-cysteine 39, cysteine 34-cysteine 50, cysteine 38-cysteine 72, cysteine 60-cysteine 80, and cysteine 74-cysteine 98. Tryptophan 63 contributes to the taurodeoxycholate binding site.

The protein belongs to the colipase family. Forms a 1:1 stoichiometric complex with pancreatic lipase. Expressed by the pancreas.

The protein localises to the secreted. In terms of biological role, colipase is a cofactor of pancreatic lipase. It allows the lipase to anchor itself to the lipid-water interface. Without colipase the enzyme is washed off by bile salts, which have an inhibitory effect on the lipase. Its function is as follows. Enterostatin has a biological activity as a satiety signal. The sequence is that of Colipase A (CLPS1) from Equus caballus (Horse).